Consider the following 372-residue polypeptide: Glutamate 5-kinase (372 aa).

Lysine 14 serves as a coordination point for ATP. Substrate is bound by residues serine 54, aspartate 141, and asparagine 153. 173-174 (TD) lines the ATP pocket. One can recognise a PUA domain in the interval 280-358 (RGHVVIDAGA…GEIETVLGYM (79 aa)).

The protein belongs to the glutamate 5-kinase family.

The protein resides in the cytoplasm. It catalyses the reaction L-glutamate + ATP = L-glutamyl 5-phosphate + ADP. The protein operates within amino-acid biosynthesis; L-proline biosynthesis; L-glutamate 5-semialdehyde from L-glutamate: step 1/2. In terms of biological role, catalyzes the transfer of a phosphate group to glutamate to form L-glutamate 5-phosphate. The protein is Glutamate 5-kinase of Burkholderia mallei (strain NCTC 10229).